The primary structure comprises 825 residues: Interleukin-4 receptor subunit alpha (825 aa).

The N-terminal stretch at 1–25 (MGWLCSGLLFPVSCLVLLQVASSGN) is a signal peptide. Residues 26 to 232 (MKVLQEPTCV…NSYREPFEQH (207 aa)) lie on the Extracellular side of the membrane. The cysteines at positions 34 and 44 are disulfide-linked. The N-linked (GlcNAc...) asparagine glycan is linked to Asn53. Cys74 and Cys86 are disulfide-bonded. N-linked (GlcNAc...) asparagine glycosylation is found at Asn98, Asn128, Asn134, Asn176, and Asn209. Residues 125–224 (APGNLTVHTN…WSPSTKWHNS (100 aa)) form the Fibronectin type-III domain. Positions 212–216 (WSEWS) match the WSXWS motif motif. The helical transmembrane segment at 233–256 (LLLGVSVSCIVILAVCLLCYVSIT) threads the bilayer. At 257-825 (KIKKEWWDQI…SVGPTYMRVS (569 aa)) the chain is on the cytoplasmic side. A Box 1 motif motif is present at residues 262-270 (WWDQIPNPA). 2 disordered regions span residues 373–397 (EEEEVEEEKGSFCASPESSRDDFQE) and 433–485 (LPPS…LTCT). Positions 437-557 (GSTSAHMPWD…ETWEQILRRN (121 aa)) are required for IRS1 activation and IL4-induced cell growth. Polar residues predominate over residues 475–485 (PTQSPDNLTCT). A phosphotyrosine mark is found at Tyr497, Tyr575, Tyr603, and Tyr631. Residues 558 to 657 (VLQHGAAAAP…VPVPLFTFGL (100 aa)) form a required for IL4-induced gene expression region. Residues 651–703 (PLFTFGLDREPPRSPQSSHLPSSSPEHLGLEPGEKVEDMPKPPLPQEQATDPL) form a disordered region. Low complexity predominate over residues 665–677 (PQSSHLPSSSPEH). Basic and acidic residues predominate over residues 678–690 (LGLEPGEKVEDMP). An ITIM motif motif is present at residues 711-716 (IVYSAL). The interval 782 to 809 (PSGISEKSKSSSSFHPAPGNAQSSSQTP) is disordered.

The protein belongs to the type I cytokine receptor family. Type 4 subfamily. The functional IL4 receptor is formed by initial binding of IL4 to IL4R. Subsequent recruitment to the complex of the common gamma chain, in immune cells, creates a type I receptor and, in non-immune cells, of IL13RA1 forms a type II receptor. IL4R can also interact with the IL13/IL13RA1 complex to form a similar type II receptor. Interacts with PIK3C3. Interacts with the SH2-containing phosphatases, PTPN6/SHIP1, PTPN11/SHIP2 and INPP5D/SHIP. Interacts with JAK1 through a Box 1-containing region; inhibited by SOCS5. Interacts with SOCS5; inhibits IL4 signaling. Interacts with JAK3. Interacts with CLM1. Interacts with IL13RA2. In terms of processing, on IL4 binding, phosphorylated on C-terminal tyrosine residues. Phosphorylation on any one of tyrosine residues, Tyr-575, Tyr-603 or Tyr-631, is required for STAT6-induced gene induction. The soluble form (sIL4R/IL4BP) can also be produced by proteolytic cleavage at the cell surface (shedding) by a metalloproteinase. Isoform 1 and isoform 2 are highly expressed in activated T-cells.

It is found in the cell membrane. The protein resides in the secreted. Receptor for both interleukin 4 and interleukin 13. Couples to the JAK1/2/3-STAT6 pathway. The IL4 response is involved in promoting Th2 differentiation. The IL4/IL13 responses are involved in regulating IgE production and, chemokine and mucus production at sites of allergic inflammation. In certain cell types, can signal through activation of insulin receptor substrates, IRS1/IRS2. Functionally, soluble IL4R (sIL4R) inhibits IL4-mediated cell proliferation and IL5 up-regulation by T-cells. The sequence is that of Interleukin-4 receptor subunit alpha (IL4R) from Homo sapiens (Human).